The following is a 275-amino-acid chain: Lectin (275 aa).

An N-terminal signal peptide occupies residues 1-30 (MASLQTQMISFYLIFLSILLTTIFFFKVNS). D-glucose contacts are provided by Asp-111 and Gly-129. 2 residues coordinate Mn(2+): Glu-149 and Asp-151. Ca(2+) is bound by residues Asp-151, Phe-153, Asn-155, and Asp-159. Residues Asp-159 and His-166 each coordinate Mn(2+). Residues 211–217 (NSLEEEN) constitute a propeptide that is removed on maturation. Residues Gly-246 and Ala-247 each coordinate D-glucose. The propeptide occupies 270 to 275 (KQAADA).

It belongs to the leguminous lectin family. Heterotetramer of two alpha and two beta chains. In terms of processing, the mature form consists of two chains, alpha and beta, produced by cleavage of the immature protein. These remain cleaved, yet fold together to form one subunit.

Functionally, D-mannose specific lectin. The polypeptide is Lectin (Lens culinaris subsp. culinaris (Cultivated lentil)).